The chain runs to 130 residues: Iron-sulfur cluster insertion protein ErpA (130 aa).

The iron-sulfur cluster site is built by cysteine 58, cysteine 122, and cysteine 124.

It belongs to the HesB/IscA family. Homodimer. Iron-sulfur cluster is required as a cofactor.

In terms of biological role, required for insertion of 4Fe-4S clusters for at least IspG. In Stenotrophomonas maltophilia (strain R551-3), this protein is Iron-sulfur cluster insertion protein ErpA.